The sequence spans 269 residues: F-box protein At5g52880 (269 aa).

An F-box domain is found at 109–155 (DIDIPSLPQDILIHIFSFLEISSLVSSAQVSRSWNQATHENSLWQSQ).

This chain is F-box protein At5g52880, found in Arabidopsis thaliana (Mouse-ear cress).